We begin with the raw amino-acid sequence, 343 residues long: Anthranilate phosphoribosyltransferase (343 aa).

5-phospho-alpha-D-ribose 1-diphosphate-binding positions include Gly85, 88-89 (GD), Thr93, 95-98 (NIST), 113-121 (KHGGRSVSS), and Ala125. Gly85 serves as a coordination point for anthranilate. Ser97 provides a ligand contact to Mg(2+). Anthranilate is bound at residue Arg171. 2 residues coordinate Mg(2+): Asp230 and Glu231.

The protein belongs to the anthranilate phosphoribosyltransferase family. Homodimer. Mg(2+) serves as cofactor.

It catalyses the reaction N-(5-phospho-beta-D-ribosyl)anthranilate + diphosphate = 5-phospho-alpha-D-ribose 1-diphosphate + anthranilate. It functions in the pathway amino-acid biosynthesis; L-tryptophan biosynthesis; L-tryptophan from chorismate: step 2/5. Its function is as follows. Catalyzes the transfer of the phosphoribosyl group of 5-phosphorylribose-1-pyrophosphate (PRPP) to anthranilate to yield N-(5'-phosphoribosyl)-anthranilate (PRA). The sequence is that of Anthranilate phosphoribosyltransferase from Aromatoleum aromaticum (strain DSM 19018 / LMG 30748 / EbN1) (Azoarcus sp. (strain EbN1)).